Consider the following 737-residue polypeptide: Polyribonucleotide nucleotidyltransferase (737 aa).

Mg(2+) contacts are provided by D489 and D495. The KH domain maps to 556-615 (PKIDTIKIDVDKIKIVIGKGGETIDKIIAETGVKIDIDEEGNVSIYSSDQDAINRAKEII). The region spanning 625–693 (DEVYRAKVVR…EKGRIDASMK (69 aa)) is the S1 motif domain. Residues 691–737 (SMKALLPRPPKPEHDEKGEKSERPHRPRHQKDYKPKKEFTETSKDSE) are disordered. Positions 700–737 (PKPEHDEKGEKSERPHRPRHQKDYKPKKEFTETSKDSE) are enriched in basic and acidic residues.

It belongs to the polyribonucleotide nucleotidyltransferase family. Mg(2+) is required as a cofactor.

It localises to the cytoplasm. The catalysed reaction is RNA(n+1) + phosphate = RNA(n) + a ribonucleoside 5'-diphosphate. Functionally, involved in mRNA degradation. Catalyzes the phosphorolysis of single-stranded polyribonucleotides processively in the 3'- to 5'-direction. The protein is Polyribonucleotide nucleotidyltransferase of Streptococcus pneumoniae serotype 4 (strain ATCC BAA-334 / TIGR4).